We begin with the raw amino-acid sequence, 308 residues long: Methionyl-tRNA formyltransferase (308 aa).

110–113 is a (6S)-5,6,7,8-tetrahydrofolate binding site; that stretch reads SLLP.

It belongs to the Fmt family.

The catalysed reaction is L-methionyl-tRNA(fMet) + (6R)-10-formyltetrahydrofolate = N-formyl-L-methionyl-tRNA(fMet) + (6S)-5,6,7,8-tetrahydrofolate + H(+). Attaches a formyl group to the free amino group of methionyl-tRNA(fMet). The formyl group appears to play a dual role in the initiator identity of N-formylmethionyl-tRNA by promoting its recognition by IF2 and preventing the misappropriation of this tRNA by the elongation apparatus. This Neisseria meningitidis serogroup A / serotype 4A (strain DSM 15465 / Z2491) protein is Methionyl-tRNA formyltransferase.